A 339-amino-acid chain; its full sequence is Photosystem II assembly lipoprotein Ycf48 (339 aa).

The first 22 residues, 1–22 (MVIVKSWQKIFALLVVLLLCIG), serve as a signal peptide directing secretion. The N-palmitoyl cysteine moiety is linked to residue cysteine 23. Cysteine 23 is lipidated: S-diacylglycerol cysteine.

This sequence belongs to the Ycf48 family. Part of early PSII assembly complexes which includes D1 (psbA) and PsbI; not found in mature PSII. Binds to the lumenal side of PSII complexes. Interacts with YidC.

The protein localises to the cellular thylakoid membrane. In terms of biological role, a factor required for optimal assembly of photosystem II (PSII), acting in the early stages of PSII assembly. Also plays a role in replacement of photodamaged D1 (psbA). Assists YidC in synthesis of chlorophyll-binding proteins. The protein is Photosystem II assembly lipoprotein Ycf48 of Trichormus variabilis (strain ATCC 29413 / PCC 7937) (Anabaena variabilis).